The chain runs to 203 residues: MSAFITFEGPEGSGKTTVLQRVSEKLAQDYQLIATREPGGVPTGEEIRKVVLEGANMDIRTEAMLFAASRREHLVEKVVPALNDNKIVLCDRYIDSSLAYQGYARGIGIEEVKQLNDFAINGLYPDLTIYLDITAEVGRDRILKNQRDQNRLDKEDIAFHEKVIEGYRQIIQETPQRFAVVDATRNIDDVVNETYEIILNFLK.

9–16 contacts ATP; it reads GPEGSGKT.

It belongs to the thymidylate kinase family.

The catalysed reaction is dTMP + ATP = dTDP + ADP. Phosphorylation of dTMP to form dTDP in both de novo and salvage pathways of dTTP synthesis. The chain is Thymidylate kinase from Staphylococcus haemolyticus (strain JCSC1435).